The following is a 471-amino-acid chain: MIVGILTTLATLATLAASVPLEERQACSSVWGQCGGQNWSGPTCCASGSTCVYSNDYYSQCLPGAASSSSSTRAASTTSRVSPTTSRSSSATPPPGSTTTRVPPVGSGTATYSGNPFVGVTPWANAYYASEVSSLAIPSLTGAMATAAAAVAKVPSFMWLDTLDKTPLMEQTLADIRTANKNGGNYAGQFVVYDLPDRDCAALASNGEYSIADGGVAKYKNYIDTIRQIVVEYSDIRTLLVIEPDSLANLVTNLGTPKCANAQSAYLECINYAVTQLNLPNVAMYLDAGHAGWLGWPANQDPAAQLFANVYKNASSPRALRGLATNVANYNGWNITSPPSYTQGNAVYNEKLYIHAIGPLLANHGWSNAFFITDQGRSGKQPTGQQQWGDWCNVIGTGFGIRPSANTGDSLLDSFVWVKPGGECDGTSDSSAPRFDSHCALPDALQPAPQAGAWFQAYFVQLLTNANPSFL.

Residues M1 to S18 form the signal peptide. A propeptide spanning residues V19–R24 is cleaved from the precursor. Q25 is subject to Pyrrolidone carboxylic acid. The region spanning A26 to L62 is the CBM1 domain. A compositionally biased stretch (low complexity) spans G64–R101. A disordered region spans residues G64–G108. Positions A66 to G106 are linker. Positions S107–L471 are catalytic. O-linked (Man...) threonine glycosylation is found at T111 and T121. Residues S130, S133, S134, and S139 are each glycosylated (O-linked (Man...) serine). Residue T146 is glycosylated (O-linked (Man...) threonine). The cysteines at positions 200 and 259 are disulfide-linked. The Proton donor role is filled by D245. N313 is a glycosylation site (N-linked (GlcNAc) asparagine). N334 carries an N-linked (GlcNAc...) (high mannose) asparagine glycan. C392 and C439 are joined by a disulfide.

The protein belongs to the glycosyl hydrolase 6 (cellulase B) family. Asn-334 contains mainly a high-mannose-type glycan (Hex(7-9)GlcNAc(2)) in a 3:1 ration with a single GlcNAc. Asn-313 was primarily unglycosylated with a small fraction (18%) bearing a single GlcNAc at this site.

It localises to the secreted. It catalyses the reaction Hydrolysis of (1-&gt;4)-beta-D-glucosidic linkages in cellulose and cellotetraose, releasing cellobiose from the non-reducing ends of the chains.. In terms of biological role, exocellobiohydrolases (CBH) that catalyzes the hydrolysis of 1,4-beta-D-glucosidic bonds in cellulose to release the disaccharide cellobiose. The degradation of cellulose involves an interplay between different cellulolytic enzymes. Hydrolysis starts with endoglucanases (EGs), which cut internal beta-1,4-glucosidic bonds in cellulose to reduce the polymerization degree of the substrate and create new chain ends for exocellobiohydrolases (CBHs). The CBHs release the disaccharide cellobiose from the non-reducing end of the cellulose polymer chain. Finally, beta-1,4-glucosidases hydrolyze the cellobiose and other short cello-oligosaccharides into glucose units. This chain is Exoglucanase 2 (cbh2), found in Hypocrea jecorina (Trichoderma reesei).